The sequence spans 30 residues: M-poneritoxin-Ng3a (30 aa).

Expressed by the venom gland.

The protein resides in the secreted. Shows a broad spectrum of activity against both Gram-positive and Gram-negative bacteria. Also has antimicrobial activity against S.cerevisiae. Has insecticidal and non-hemolytic activity. The chain is M-poneritoxin-Ng3a from Neoponera goeldii (Ponerine ant).